Consider the following 303-residue polypeptide: Heme A synthase (303 aa).

The Cytoplasmic segment spans residues Met-1–Lys-8. A helical transmembrane segment spans residues Trp-9–Thr-29. The Extracellular segment spans residues Lys-30–Ser-67. A disulfide bridge connects residues Cys-37 and Cys-44. Glu-60 is a catalytic residue. His-63 is a binding site for heme o. Residues Ala-68–Ile-88 traverse the membrane as a helical segment. Topologically, residues Lys-89–Pro-93 are cytoplasmic. A helical membrane pass occupies residues Leu-94–Ile-114. The Extracellular segment spans residues Trp-115–His-125. His-125 contributes to the heme o binding site. A helical transmembrane segment spans residues Phe-126–Ile-146. Residues Asp-147–Arg-163 lie on the Cytoplasmic side of the membrane. A helical membrane pass occupies residues Leu-164–His-184. At Ala-185 to Arg-215 the chain is on the extracellular side. His-214 is a heme b binding site. The chain crosses the membrane as a helical span at residues Ile-216–Tyr-236. Over Pro-237–Tyr-244 the chain is Cytoplasmic. A helical transmembrane segment spans residues Gly-245–Met-265. The Extracellular portion of the chain corresponds to Thr-266–Leu-270. The helical transmembrane segment at Leu-271–Ile-291 threads the bilayer. Position 276 (His-276) interacts with heme b. The Cytoplasmic segment spans residues Met-292–Gln-303.

The protein belongs to the COX15/CtaA family. Type 1 subfamily. Interacts with CtaB. The cofactor is heme b.

The protein resides in the cell membrane. The enzyme catalyses Fe(II)-heme o + 2 A + H2O = Fe(II)-heme a + 2 AH2. Its pathway is porphyrin-containing compound metabolism; heme A biosynthesis; heme A from heme O: step 1/1. Functionally, catalyzes the conversion of heme O to heme A by two successive hydroxylations of the methyl group at C8. The first hydroxylation forms heme I, the second hydroxylation results in an unstable dihydroxymethyl group, which spontaneously dehydrates, resulting in the formyl group of heme A. This chain is Heme A synthase, found in Staphylococcus aureus (strain MSSA476).